We begin with the raw amino-acid sequence, 308 residues long: Aspartate carbamoyltransferase catalytic subunit (308 aa).

The carbamoyl phosphate site is built by R55 and T56. An L-aspartate-binding site is contributed by K84. Residues R105, H133, and Q136 each contribute to the carbamoyl phosphate site. L-aspartate is bound by residues R167 and R228. Positions 267 and 268 each coordinate carbamoyl phosphate.

The protein belongs to the aspartate/ornithine carbamoyltransferase superfamily. ATCase family. In terms of assembly, heterooligomer of catalytic and regulatory chains.

The catalysed reaction is carbamoyl phosphate + L-aspartate = N-carbamoyl-L-aspartate + phosphate + H(+). The protein operates within pyrimidine metabolism; UMP biosynthesis via de novo pathway; (S)-dihydroorotate from bicarbonate: step 2/3. Catalyzes the condensation of carbamoyl phosphate and aspartate to form carbamoyl aspartate and inorganic phosphate, the committed step in the de novo pyrimidine nucleotide biosynthesis pathway. The protein is Aspartate carbamoyltransferase catalytic subunit of Methanocella arvoryzae (strain DSM 22066 / NBRC 105507 / MRE50).